We begin with the raw amino-acid sequence, 261 residues long: Chanoclavine-I dehydrogenase ifgE (261 aa).

Residues 1–20 (MASVKSRVFAITGGASGIGA) form the signal peptide. NADP(+)-binding residues include isoleucine 18, lysine 48, aspartate 66, arginine 132, tyrosine 166, lysine 170, and threonine 201. Catalysis depends on tyrosine 166, which acts as the Proton acceptor. Catalysis depends on lysine 170, which acts as the Lowers pKa of active site Tyr.

This sequence belongs to the short-chain dehydrogenases/reductases (SDR) family.

It functions in the pathway alkaloid biosynthesis; ergot alkaloid biosynthesis. In terms of biological role, chanoclavine-I dehydrogenase; part of the gene cluster that mediates the biosynthesis of isofumigaclavines, fungal ergot alkaloids. The tryptophan dimethylallyltransferase ifgA catalyzes the first step of ergot alkaloid biosynthesis by condensing dimethylallyl diphosphate (DMAP) and tryptophan to form 4-dimethylallyl-L-tryptophan. The second step is catalyzed by the methyltransferase ifgB that methylates 4-dimethylallyl-L-tryptophan in the presence of S-adenosyl-L-methionine, resulting in the formation of N-methyl-dimethylallyl-L-tryptophan. The catalase ifgD and the FAD-dependent oxidoreductase ifgC then transform N-methyl-dimethylallyl-L-tryptophan to chanoclavine-I which is further oxidized by ifgE in the presence of NAD(+), resulting in the formation of chanoclavine-I aldehyde. The chanoclavine-I aldehyde reductases ifgG and/or fgaOx3 reduce chanoclavine-I aldehyde to dihydrochanoclavine-I aldehyde that spontaneously dehydrates to form 6,8-dimethyl-6,7-didehydroergoline. The festuclavine dehydrogenases ifgF1 and/or ifgF2 then catalyze the reduction of 6,8-dimethyl-6,7-didehydroergoline to form festuclavine. Hydrolysis of festuclavine by a yet undetermined cytochrome P450 monooxygenase (called ifgH) then leads to the formation of isofumigaclavine B which is in turn acetylated by ifgI to isofumigaclavine A. Penicillium roqueforti has interestingly at least two sets of genes for the consumption of chanoclavine-I aldehyde on three different loci, the OYEs ifgG/fgaOx3 and the festuclavine synthase homologs ifgF1/ifgF2. The reason for the duplication of these genes is unclear, probably to ensure the conversion of chanoclavine-I aldehyde by differential gene expression under various environmental conditions. This Penicillium roqueforti (strain FM164) protein is Chanoclavine-I dehydrogenase ifgE.